The sequence spans 159 residues: MAVININEVITHLLPGQTIAGLDLGKKTIGIAVSDRGLTFSNPRSVLQRKKLTVDARTLIQIFDRENVGVVIIGLPLNMNGSSGPRAQATRTFVNNMEAYTEIPFVFWDERLSTIAAERSLLEMDVSRAKRATRIDSAAAAFILQGALNRIQNLHYMEG.

Belongs to the YqgF nuclease family.

Its subcellular location is the cytoplasm. In terms of biological role, could be a nuclease involved in processing of the 5'-end of pre-16S rRNA. In Bartonella quintana (strain Toulouse) (Rochalimaea quintana), this protein is Putative pre-16S rRNA nuclease.